Here is a 619-residue protein sequence, read N- to C-terminus: Kinesin light chain 4 (619 aa).

Ser-2 bears the N-acetylserine mark. One copy of the TPR 1 repeat lies at 55–88; sequence QQGGHEEGLVHEKARQLRRSMENIELGLSEAQVM. Residues 65 to 155 adopt a coiled-coil conformation; it reads HEKARQLRRS…HLEFLRQLRQ (91 aa). The segment covering 156-175 has biased composition (basic and acidic residues); sequence YDEDGHGMEEKEGEATKDSL. The segment at 156–199 is disordered; that stretch reads YDEDGHGMEEKEGEATKDSLDDLFPNEEEEDSGNDLSRGQGAAA. Position 174 is a phosphoserine (Ser-174). Acidic residues predominate over residues 179–188; the sequence is FPNEEEEDSG. TPR repeat units lie at residues 211-244, 253-286, 295-328, 337-370, and 379-412; these read LRTLHNLVIQYAAQGRYEVAVPLCKQALEDLERT, ATMLNILALVYRDQNKYKEAAHLLNDALSIREST, AATLNNLAVLYGKRGKYKEAEPLCQRALEIREKV, AKQLNNLALLCQNQGKYEAVERYYQRALAIYESQ, and ARTKNNLASCYLKQGKYSEAEALYKEILTCAHVQ. Residue Ser-460 is modified to Phosphoserine. The stretch at 464 to 497 is one TPR 7 repeat; the sequence is NTTLKNLGALYRRQGKLEAAETLEECALRSRKQG. 3 positions are modified to phosphoserine: Ser-565, Ser-566, and Ser-590. The tract at residues 571-619 is disordered; that stretch reads RKLQGTEPRPSSSSMKRAASLNYLNQPNAAPLQVSRGLSASTVDLSSSS. A compositionally biased stretch (low complexity) spans 609-619; sequence SASTVDLSSSS. The residue at position 612 (Thr-612) is a Phosphothreonine.

This sequence belongs to the kinesin light chain family. As to quaternary structure, oligomeric complex composed of two heavy chains and two light chains.

Its subcellular location is the cytoplasm. It is found in the cytoskeleton. Functionally, kinesin is a microtubule-associated force-producing protein that may play a role in organelle transport. The light chain may function in coupling of cargo to the heavy chain or in the modulation of its ATPase activity. This is Kinesin light chain 4 (Klc4) from Mus musculus (Mouse).